A 461-amino-acid chain; its full sequence is Phosphatidate cytidylyltransferase 1 (461 aa).

Positions 1–67 (MLELRHRGSC…IPEIPPSSDR (67 aa)) are disordered. Arg7 carries the omega-N-methylarginine modification. Residues 20-56 (PHREGEAAGGDHETESTSDKETDIDDRYGDLDSRTDS) are compositionally biased toward basic and acidic residues. A phosphoserine mark is found at Ser35 and Ser37. A run of 6 helical transmembrane segments spans residues 96–116 (MISL…LLVL), 149–169 (FLLC…FATF), 183–203 (HRFI…LSLV), 230–250 (LVIQ…SSVI), 279–299 (GFIG…YVLS), and 357–377 (IALS…ASGF).

The protein belongs to the CDS family. Homodimer. Interacts with FOS; this interaction may enhance catalytic activity. The cofactor is Mg(2+). In terms of tissue distribution, expressed in adult tissues such as placenta, brain, small intestine, ovary, testis and prostate. Highly expressed in fetal kidney, lung and brain. Lower level in fetal liver.

The protein localises to the endoplasmic reticulum membrane. The catalysed reaction is a 1,2-diacyl-sn-glycero-3-phosphate + CTP + H(+) = a CDP-1,2-diacyl-sn-glycerol + diphosphate. The enzyme catalyses 1-octadecanoyl-2-(5Z,8Z,11Z,14Z-eicosatetraenoyl)-sn-glycero-3-phosphate + CTP + H(+) = 1-octadecanoyl-2-(5Z,8Z,11Z,14Z-eicosatetraenoyl)-sn-glycero-3-cytidine-5'-diphosphate + diphosphate. It carries out the reaction 1-octadecanoyl-2-(9Z,12Z-octadecadienoyl)-sn-glycero-3-phosphate + CTP + H(+) = 1-octadecanoyl-2-(9Z,12Z-octadecadienoyl)-sn-glycero-3-cytidine-5'-diphosphate + diphosphate. It catalyses the reaction 1-hexadecanoyl-2-(5Z,8Z,11Z,14Z-eicosatetraenoyl)-sn-glycero-3-phosphate + CTP + H(+) = 1-hexadecanoyl-2-(5Z,8Z,11Z,14Z-eicosatetraenoyl)-sn-glycero-3-cytidine-5'-diphosphate + diphosphate. The catalysed reaction is 1,2-di-(5Z,8Z,11Z,14Z)-eicosatetraenoyl-sn-glycero-3-phosphate + CTP + H(+) = 1,2-di-(5Z,8Z,11Z,14Z-eicosatetraenoyl)-sn-glycero-3-cytidine-5'-diphosphate + diphosphate. The enzyme catalyses 1-octadecanoyl-2-(9Z-octadecenoyl)-sn-glycero-3-phosphate + CTP + H(+) = 1-octadecanoyl-2-(9Z-octadecenoyl)-sn-glycero-3-cytidine-5'-diphosphate + diphosphate. It carries out the reaction 1-octadecanoyl-2-(4Z,7Z,10Z,13Z,16Z,19Z-docosahexaenoyl)-sn-glycero-3-phosphate + CTP + H(+) = 1-octadecanoyl-2-(4Z,7Z,10Z,13Z,16Z,19Z-docosahexaenoyl)-sn-glycero-3-cytidine-5'-diphosphate + diphosphate. It catalyses the reaction 1,2-di-(9Z,12Z-octadecadienoyl)-sn-glycero-3-phosphate + CTP + H(+) = 1,2-di-(9Z,12Z-octadecadienoyl)-sn-glycero-3-cytidine-5'-diphosphate + diphosphate. The catalysed reaction is 1,2-di-(9Z-octadecenoyl)-sn-glycero-3-phosphate + CTP + H(+) = 1,2-di-(9Z-octadecenoyl)-sn-glycero-3-cytidine-5'-diphosphate + diphosphate. The protein operates within phospholipid metabolism; CDP-diacylglycerol biosynthesis; CDP-diacylglycerol from sn-glycerol 3-phosphate: step 3/3. With respect to regulation, inhibited by its anionic phospholipid end products, with phosphatidylinositol-(4,5)- bisphosphate showing the strongest inhibition. In terms of biological role, catalyzes the conversion of phosphatidic acid (PA) to CDP-diacylglycerol (CDP-DAG), an essential intermediate in the synthesis of phosphatidylglycerol, cardiolipin and phosphatidylinositol. Exhibits almost no acyl chain preference for PA, showing no discrimination for the sn-1/sn-2 acyl chain composition of PAs. Plays an important role in regulating the growth of lipid droplets which are storage organelles at the center of lipid and energy homeostasis. Positively regulates the differentiation and development of adipocytes. This chain is Phosphatidate cytidylyltransferase 1, found in Homo sapiens (Human).